Here is an 88-residue protein sequence, read N- to C-terminus: Alpha-latrotoxin associated low molecular weight protein 2 (88 aa).

Residues 1–19 form the signal peptide; sequence MLKLICIAFLVTVLTLVAG. Intrachain disulfides connect Cys-30–Cys-66, Cys-46–Cys-62, and Cys-49–Cys-75.

It belongs to the arthropod CHH/MIH/GIH/VIH hormone family. In terms of tissue distribution, expressed by the venom gland.

Its subcellular location is the secreted. In terms of biological role, may increase the toxicity of alpha-latrotoxin and/or other venom components. Is non-toxic to mice and to the cockroach Periplaneta americana. In Latrodectus hesperus (Western black widow spider), this protein is Alpha-latrotoxin associated low molecular weight protein 2.